The sequence spans 731 residues: 1,4-alpha-glucan branching enzyme GlgB 2 (731 aa).

Aspartate 410 (nucleophile) is an active-site residue. Residue glutamate 463 is the Proton donor of the active site.

Belongs to the glycosyl hydrolase 13 family. GlgB subfamily. As to quaternary structure, monomer.

It catalyses the reaction Transfers a segment of a (1-&gt;4)-alpha-D-glucan chain to a primary hydroxy group in a similar glucan chain.. The protein operates within glycan biosynthesis; glycogen biosynthesis. Its function is as follows. Catalyzes the formation of the alpha-1,6-glucosidic linkages in glycogen by scission of a 1,4-alpha-linked oligosaccharide from growing alpha-1,4-glucan chains and the subsequent attachment of the oligosaccharide to the alpha-1,6 position. The protein is 1,4-alpha-glucan branching enzyme GlgB 2 of Xanthomonas oryzae pv. oryzae (strain MAFF 311018).